The sequence spans 360 residues: Inward rectifier potassium channel 13 (360 aa).

At Met1–Asp50 the chain is on the cytoplasmic side. The helical transmembrane segment at Met51–Ile77 threads the bilayer. Residues Leu78–Ser105 lie on the Extracellular side of the membrane. Residues Phe106 to Tyr122 constitute an intramembrane region (helical; Pore-forming). The short motif at Thr119 to Thr124 is the Selectivity filter element. The Extracellular portion of the chain corresponds to Gly123–Cys131. Residues Pro132 to Val157 form a helical membrane-spanning segment. Residues Ala158–Glu360 are Cytoplasmic-facing. Phosphoserine is present on Ser287.

This sequence belongs to the inward rectifier-type potassium channel (TC 1.A.2.1) family. As to quaternary structure, homotetramer. Interacts with RAB28; the interaction may facilitate cone outer segments phagocytosis. In terms of processing, phosphorylation at Ser-287 by PKA increases them.

It is found in the membrane. Its subcellular location is the cell membrane. It catalyses the reaction K(+)(in) = K(+)(out). Inhibited by Ba(2+) and Cs(+), although sensitivity to those inhibitors is much lower than in other Kir channels. Functionally, inward rectifier potassium channels are characterized by a greater tendency to allow potassium to flow into the cell rather than out of it. Their voltage dependence is regulated by the concentration of extracellular potassium; as external potassium is raised, the voltage range of the channel opening shifts to more positive voltages. The inward rectification is mainly due to the blockage of outward current by internal magnesium. KCNJ13 has a very low single channel conductance, low sensitivity to block by external barium and cesium, and no dependence of its inward rectification properties on the internal blocking particle magnesium. The polypeptide is Inward rectifier potassium channel 13 (KCNJ13) (Bos taurus (Bovine)).